The chain runs to 87 residues: Insulin-related peptide 1 (87 aa).

An N-terminal signal peptide occupies residues 1 to 19 (MKSFMVFVLIFACFSCYYA). The propeptide occupies 20–44 (QESTNFYCGRTLSRALAVLCYGAES). Arginine amide is present on R64. Residues 68–87 (GPVDECCEKACSIQELMTYC) constitute a propeptide that is removed on maturation.

This sequence belongs to the insulin family. DAGWWIPQHGHHALAGVR-amide: Expressed in corpora cardiaca (CC), corpora allata (CA), antennal lobe (AL) and gnathal ganglion (GNG) (at protein level). Expression in CC and CA detected in most animals, in AL and GNG in few animals (at protein level).

Its subcellular location is the secreted. This Agrotis ipsilon (Black cutworm moth) protein is Insulin-related peptide 1.